The primary structure comprises 341 residues: Solute carrier family 25 member 43 (341 aa).

Solcar repeat units lie at residues 11–101, 105–185, and 200–298; these read TGGQ…TDDL, SQWS…LLVY, and SLPQ…LYQN. The next 6 helical transmembrane spans lie at 16–36, 68–88, 110–130, 166–186, 205–225, and 262–282; these read LLCAGLAGTLSLSLTAPLELA, LWKGNAVACLRLFPCSAVQLA, IMAGSLAGMVSTIVTYPTDLI, GVSLTVVGALPFSAGSLLVYM, FANVCLAAAVTQTLSFPFETV, and VLGLWNGLTANLLKIVPYFGI.

This sequence belongs to the mitochondrial carrier (TC 2.A.29) family.

Its subcellular location is the mitochondrion inner membrane. The polypeptide is Solute carrier family 25 member 43 (SLC25A43) (Homo sapiens (Human)).